The chain runs to 360 residues: MEKMFSLRAHAAPVSGFCPWENQLVSADRSGTLIVWNLSTRRPAARFRAHEGQVLSMQPTRFGLLTHGRDSAVRIWPPGAAENSKGGDPHPIFEMPVNALNFCNVAYIDGADGTALLATPASVDSDCFDVYRLSPDFSLARAVENQAPKQEQRGADQIEEIGAPPGRGEGIIMRLAWAAPDLLYVGYESGALASFSLSPEGCRMLWLARAHSPHPVLSLALEGARVYSGSAAKTLLVHEPPHEEAVAKHNLGHYGVQCFEILPHLYLAGFWDGSVAGFSRDWQQLFSLERPHEQIEAPESPSRKSLCLFVWSAPAAPEQSRRDRLRSRRAAGRLLFVGHADGLIVAYAIDESSENGLLES.

WD repeat units follow at residues 9–46 (AHAAPVSGFCPWENQLVSADRSGTLIVWNLSTRRPAAR), 49–86 (AHEGQVLSMQPTRFGLLTHGRDSAVRIWPPGAAENSKG), 167–205 (RGEGIIMRLAWAAPDLLYVGYESGALASFSLSPEGCRML), and 317–357 (PEQS…ENGL).

The protein belongs to the WD repeat ASA1 family. Component of the ASTRA chromatin remodeling machinery complex.

Its subcellular location is the nucleus. In terms of biological role, component of the ASTRA complex involved in chromatin remodeling. This chain is ASTRA-associated protein 1 (ASA1), found in Clavispora lusitaniae (strain ATCC 42720) (Yeast).